The sequence spans 207 residues: ATP-dependent Clp protease proteolytic subunit (207 aa).

S111 serves as the catalytic Nucleophile. H136 is a catalytic residue.

It belongs to the peptidase S14 family. In terms of assembly, fourteen ClpP subunits assemble into 2 heptameric rings which stack back to back to give a disk-like structure with a central cavity, resembling the structure of eukaryotic proteasomes.

Its subcellular location is the cytoplasm. It catalyses the reaction Hydrolysis of proteins to small peptides in the presence of ATP and magnesium. alpha-casein is the usual test substrate. In the absence of ATP, only oligopeptides shorter than five residues are hydrolyzed (such as succinyl-Leu-Tyr-|-NHMec, and Leu-Tyr-Leu-|-Tyr-Trp, in which cleavage of the -Tyr-|-Leu- and -Tyr-|-Trp bonds also occurs).. Its function is as follows. Cleaves peptides in various proteins in a process that requires ATP hydrolysis. Has a chymotrypsin-like activity. Plays a major role in the degradation of misfolded proteins. This chain is ATP-dependent Clp protease proteolytic subunit, found in Yersinia pseudotuberculosis serotype O:1b (strain IP 31758).